The chain runs to 607 residues: UvrABC system protein C (607 aa).

A GIY-YIG domain is found at 16–94; the sequence is GRPGVYRMFD…IKEWRPPYNI (79 aa). In terms of domain architecture, UVR spans 203-238; sequence NALTDELSTAMEAAASTLDFEKAAELRDQISLLRRV.

The protein belongs to the UvrC family. Interacts with UvrB in an incision complex.

Its subcellular location is the cytoplasm. In terms of biological role, the UvrABC repair system catalyzes the recognition and processing of DNA lesions. UvrC both incises the 5' and 3' sides of the lesion. The N-terminal half is responsible for the 3' incision and the C-terminal half is responsible for the 5' incision. The protein is UvrABC system protein C of Pseudomonas fluorescens (strain ATCC BAA-477 / NRRL B-23932 / Pf-5).